The following is a 337-amino-acid chain: Serpentine receptor class alpha-17 (337 aa).

Helical transmembrane passes span 28-48, 110-130, 155-175, 197-217, 247-267, and 282-302; these read LNFV…GLAI, ELYF…SLTF, IIQL…VPLV, FRTA…YLSV, CILI…VNYI, and IAPF…VIYF.

The protein belongs to the nematode receptor-like protein sra family.

Its subcellular location is the membrane. In Caenorhabditis elegans, this protein is Serpentine receptor class alpha-17 (sra-17).